The chain runs to 458 residues: Probable alpha-L-glutamate ligase (458 aa).

The tract at residues 1–162 (MSDNKFIIGS…YGVKTAKKSG (162 aa)) is unknown. The interval 163 to 458 (LKIGLLASNP…IEKKLGWKAD (296 aa)) is alpha-L-glutamate ligase. The region spanning 267-450 (LQLLQKNNLD…IAGAMIESIE (184 aa)) is the ATP-grasp domain. Residues Lys-304, 341-342 (EF), Asp-350, and 374-376 (RAN) each bind ATP. Positions 411, 423, and 425 each coordinate Mg(2+). Mn(2+)-binding residues include Asp-411, Glu-423, and Asn-425.

It in the C-terminal section; belongs to the RimK family. Mg(2+) is required as a cofactor. Requires Mn(2+) as cofactor.

This chain is Probable alpha-L-glutamate ligase, found in Shewanella pealeana (strain ATCC 700345 / ANG-SQ1).